The following is a 475-amino-acid chain: Tubulin epsilon chain (475 aa).

148–154 (GGGTGSG) lines the GTP pocket.

It belongs to the tubulin family. Found in a complex with TEDC1, TEDC2, TUBE1 and TUBD1.

Its subcellular location is the cytoplasm. It is found in the cytoskeleton. The protein resides in the microtubule organizing center. The protein localises to the centrosome. This chain is Tubulin epsilon chain (TUBE1), found in Homo sapiens (Human).